The primary structure comprises 69 residues: Protein transport protein Sec61 subunit gamma-1 (69 aa).

Position 1 is an N-acetylmethionine (M1). At 1 to 32 (MDAIDSVVDPLRDFAKDSIRLVKRCHKPDRKE) the chain is on the cytoplasmic side. A helical membrane pass occupies residues 33–61 (FTKVAVRTAIGFVVMGFVGFFVKLIFIPI). Topologically, residues 62–69 (NNIIVGAT) are extracellular.

This sequence belongs to the SecE/SEC61-gamma family. In terms of assembly, heterotrimeric complex composed of SEC61-alpha, SEC61-beta and SEC61-gamma.

It localises to the endoplasmic reticulum membrane. Its function is as follows. Necessary for protein translocation in the endoplasmic reticulum. This chain is Protein transport protein Sec61 subunit gamma-1 (SEC61G1), found in Arabidopsis thaliana (Mouse-ear cress).